We begin with the raw amino-acid sequence, 950 residues long: ABC transporter A family member 9 (950 aa).

Helical transmembrane passes span 31-51 (ATCL…SIEE), 223-243 (IISA…MFGF), 276-296 (WLIW…LFGM), 308-328 (FVLV…LAFA), 342-362 (VGFL…AGFP), and 426-446 (IWLV…DNII). The ABC transporter domain maps to 520-765 (VQIHGLAKTY…FGTGFVATVS (246 aa)). Residue 566–573 (GPNGAGKT) coordinates ATP.

This sequence belongs to the ABC transporter superfamily. ABCA family. CPR flippase (TC 3.A.1.211) subfamily. Highly expressed in siliques. Detected in seedlings, rosette leaves, stems and flowers.

It is found in the endoplasmic reticulum membrane. Functionally, mediates the transport of acyl-CoAs and/or free fatty acids to the endoplasmic reticulum. Has no effect on the selectivity of fatty acid incorporation into triacylglycerol or further desaturation steps. In Arabidopsis thaliana (Mouse-ear cress), this protein is ABC transporter A family member 9 (ABCA9).